The sequence spans 86 residues: U2-sicaritoxin-Li1a (86 aa).

Residues 1–20 (MTFKLFVVVTLVLAIYVATA) form the signal peptide. Positions 21-33 (EEAMKDDSEPAER) are excised as a propeptide. Intrachain disulfides connect Cys35/Cys53, Cys42/Cys62, Cys52/Cys71, and Cys64/Cys69.

Belongs to the neurotoxin 39 family. As to expression, expressed by the venom gland.

The protein resides in the secreted. In terms of biological role, toxin active against S.frugiperda larvae. May act on sodium channels (Nav). This is U2-sicaritoxin-Li1a from Loxosceles intermedia (Brown spider).